A 321-amino-acid chain; its full sequence is Probable E3 ubiquitin-protein ligase BAH1-like 1 (321 aa).

The SPX domain maps to 1–149 (MKFAKKYEKY…YSKQGQEFKA (149 aa)). The segment at 217-266 (CSICLDTVFDPVALSCGHIYCYLCSCSAASVTIVDGLKSAERKSKCPLCR) adopts an RING-type zinc-finger fold.

It belongs to the RING-type zinc finger family.

The enzyme catalyses S-ubiquitinyl-[E2 ubiquitin-conjugating enzyme]-L-cysteine + [acceptor protein]-L-lysine = [E2 ubiquitin-conjugating enzyme]-L-cysteine + N(6)-ubiquitinyl-[acceptor protein]-L-lysine.. It participates in protein modification; protein ubiquitination. This chain is Probable E3 ubiquitin-protein ligase BAH1-like 1, found in Oryza sativa subsp. indica (Rice).